The chain runs to 171 residues: Adenine phosphoribosyltransferase (171 aa).

Belongs to the purine/pyrimidine phosphoribosyltransferase family. In terms of assembly, homodimer.

Its subcellular location is the cytoplasm. The enzyme catalyses AMP + diphosphate = 5-phospho-alpha-D-ribose 1-diphosphate + adenine. It participates in purine metabolism; AMP biosynthesis via salvage pathway; AMP from adenine: step 1/1. Catalyzes a salvage reaction resulting in the formation of AMP, that is energically less costly than de novo synthesis. This Natranaerobius thermophilus (strain ATCC BAA-1301 / DSM 18059 / JW/NM-WN-LF) protein is Adenine phosphoribosyltransferase.